Reading from the N-terminus, the 61-residue chain is Large ribosomal subunit protein uL30 (61 aa).

The protein belongs to the universal ribosomal protein uL30 family. As to quaternary structure, part of the 50S ribosomal subunit.

In Methylococcus capsulatus (strain ATCC 33009 / NCIMB 11132 / Bath), this protein is Large ribosomal subunit protein uL30.